Here is a 359-residue protein sequence, read N- to C-terminus: Protein-glutamate methylesterase/protein-glutamine glutaminase 1 (359 aa).

The Response regulatory domain maps to Ser-4–Glu-121. Position 55 is a 4-aspartylphosphate (Asp-55). The CheB-type methylesterase domain maps to Tyr-169–Leu-354. Catalysis depends on residues Ser-181, His-207, and Asp-303.

Belongs to the CheB family. Post-translationally, phosphorylated by CheA. Phosphorylation of the N-terminal regulatory domain activates the methylesterase activity.

The protein resides in the cytoplasm. The enzyme catalyses [protein]-L-glutamate 5-O-methyl ester + H2O = L-glutamyl-[protein] + methanol + H(+). The catalysed reaction is L-glutaminyl-[protein] + H2O = L-glutamyl-[protein] + NH4(+). Involved in chemotaxis. Part of a chemotaxis signal transduction system that modulates chemotaxis in response to various stimuli. Catalyzes the demethylation of specific methylglutamate residues introduced into the chemoreceptors (methyl-accepting chemotaxis proteins or MCP) by CheR. Also mediates the irreversible deamidation of specific glutamine residues to glutamic acid. The sequence is that of Protein-glutamate methylesterase/protein-glutamine glutaminase 1 from Chromobacterium violaceum (strain ATCC 12472 / DSM 30191 / JCM 1249 / CCUG 213 / NBRC 12614 / NCIMB 9131 / NCTC 9757 / MK).